A 66-amino-acid chain; its full sequence is UPF0337 protein BA_0987/GBAA_0987/BAS0923 (66 aa).

A disordered region spans residues 1 to 22 (MSESGLKEQITGKVEKTKGQVK). Residues 13 to 22 (KVEKTKGQVK) show a composition bias toward basic and acidic residues.

It belongs to the UPF0337 (CsbD) family.

In Bacillus anthracis, this protein is UPF0337 protein BA_0987/GBAA_0987/BAS0923.